We begin with the raw amino-acid sequence, 156 residues long: MPEAPGPAPAALPARGTLLAFDFGLARIGVAVGELETRRASALLTLHGEASAPRFAAIAKLLDEWRPVGLVVGMPSHLDGTPHEMTARCRRFANQLHGRFGLPVLECDERLSSAAADAALAEAGTHDWRARKQVLDAVAAQIILQHFLDTHGHAKP.

The protein belongs to the YqgF nuclease family.

It localises to the cytoplasm. Its function is as follows. Could be a nuclease involved in processing of the 5'-end of pre-16S rRNA. The sequence is that of Putative pre-16S rRNA nuclease from Aromatoleum aromaticum (strain DSM 19018 / LMG 30748 / EbN1) (Azoarcus sp. (strain EbN1)).